Reading from the N-terminus, the 495-residue chain is Catalase (495 aa).

The interval 1-25 (MSNNKKLTSLFGAPVSDRENSMTAG) is disordered. Residues His-55 and Asn-128 contribute to the active site. Tyr-338 contacts heme.

This sequence belongs to the catalase family. Homodimer. Heme serves as cofactor.

It carries out the reaction 2 H2O2 = O2 + 2 H2O. Its function is as follows. Decomposes hydrogen peroxide into water and oxygen; serves to protect cells from the toxic effects of hydrogen peroxide. The chain is Catalase (katA) from Staphylococcus saprophyticus subsp. saprophyticus (strain ATCC 15305 / DSM 20229 / NCIMB 8711 / NCTC 7292 / S-41).